A 483-amino-acid chain; its full sequence is Aspartyl/glutamyl-tRNA(Asn/Gln) amidotransferase subunit B (483 aa).

Belongs to the GatB/GatE family. GatB subfamily. In terms of assembly, heterotrimer of A, B and C subunits.

The catalysed reaction is L-glutamyl-tRNA(Gln) + L-glutamine + ATP + H2O = L-glutaminyl-tRNA(Gln) + L-glutamate + ADP + phosphate + H(+). It catalyses the reaction L-aspartyl-tRNA(Asn) + L-glutamine + ATP + H2O = L-asparaginyl-tRNA(Asn) + L-glutamate + ADP + phosphate + 2 H(+). Allows the formation of correctly charged Asn-tRNA(Asn) or Gln-tRNA(Gln) through the transamidation of misacylated Asp-tRNA(Asn) or Glu-tRNA(Gln) in organisms which lack either or both of asparaginyl-tRNA or glutaminyl-tRNA synthetases. The reaction takes place in the presence of glutamine and ATP through an activated phospho-Asp-tRNA(Asn) or phospho-Glu-tRNA(Gln). This Rickettsia conorii (strain ATCC VR-613 / Malish 7) protein is Aspartyl/glutamyl-tRNA(Asn/Gln) amidotransferase subunit B.